A 131-amino-acid chain; its full sequence is Large ribosomal subunit protein bL21 (131 aa).

The segment covering 106-116 has biased composition (basic and acidic residues); it reads TIDDMPKKEAA. Residues 106 to 131 are disordered; it reads TIDDMPKKEAAPAKARRSTKKAAAAE.

It belongs to the bacterial ribosomal protein bL21 family. In terms of assembly, part of the 50S ribosomal subunit. Contacts protein L20.

In terms of biological role, this protein binds to 23S rRNA in the presence of protein L20. This is Large ribosomal subunit protein bL21 from Koribacter versatilis (strain Ellin345).